Here is a 226-residue protein sequence, read N- to C-terminus: Acyl-protein thioesterase 1 homolog 1 (226 aa).

Catalysis depends on charge relay system residues S121, D174, and H206.

This sequence belongs to the AB hydrolase superfamily. AB hydrolase 2 family.

The protein resides in the cytoplasm. It is found in the nucleus. It catalyses the reaction S-hexadecanoyl-L-cysteinyl-[protein] + H2O = L-cysteinyl-[protein] + hexadecanoate + H(+). Its function is as follows. Hydrolyzes fatty acids from S-acylated cysteine residues in proteins with a strong preference for palmitoylated G-alpha proteins over other acyl substrates. Mediates the deacylation of G-alpha proteins such as GPA1 in vivo, but has weak or no activity toward palmitoylated Ras proteins. Has weak lysophospholipase activity in vitro; however such activity may not exist in vivo. The polypeptide is Acyl-protein thioesterase 1 homolog 1 (Dictyostelium discoideum (Social amoeba)).